A 313-amino-acid chain; its full sequence is 4-diphosphocytidyl-2-C-methyl-D-erythritol kinase (313 aa).

The active site involves K29. Position 113-123 (113-123 (PMGGGVGGGSS)) interacts with ATP. The active site involves D155.

Belongs to the GHMP kinase family. IspE subfamily.

It catalyses the reaction 4-CDP-2-C-methyl-D-erythritol + ATP = 4-CDP-2-C-methyl-D-erythritol 2-phosphate + ADP + H(+). The protein operates within isoprenoid biosynthesis; isopentenyl diphosphate biosynthesis via DXP pathway; isopentenyl diphosphate from 1-deoxy-D-xylulose 5-phosphate: step 3/6. In terms of biological role, catalyzes the phosphorylation of the position 2 hydroxy group of 4-diphosphocytidyl-2C-methyl-D-erythritol. The polypeptide is 4-diphosphocytidyl-2-C-methyl-D-erythritol kinase (Haemophilus influenzae (strain 86-028NP)).